A 143-amino-acid polypeptide reads, in one-letter code: Ribonuclease P protein component 2 (143 aa).

The protein belongs to the eukaryotic/archaeal RNase P protein component 2 family. In terms of assembly, consists of a catalytic RNA component and at least 4-5 protein subunits.

It is found in the cytoplasm. The catalysed reaction is Endonucleolytic cleavage of RNA, removing 5'-extranucleotides from tRNA precursor.. Its function is as follows. Part of ribonuclease P, a protein complex that generates mature tRNA molecules by cleaving their 5'-ends. In Saccharolobus islandicus (strain L.S.2.15 / Lassen #1) (Sulfolobus islandicus), this protein is Ribonuclease P protein component 2.